Consider the following 524-residue polypeptide: Phytoene desaturase (neurosporene-forming) (524 aa).

Residue 12–45 (VVIGAGLGGLAAAMRLGAKGYKVTVVDRLDRPGG) participates in FAD binding. The interval 500-524 (PDAPKPETPAAAAPKARTPRAKAAQ) is disordered. Positions 507 to 524 (TPAAAAPKARTPRAKAAQ) are enriched in low complexity.

The protein belongs to the carotenoid/retinoid oxidoreductase family. It depends on FAD as a cofactor.

It catalyses the reaction 15-cis-phytoene + 3 A = all-trans-neurosporene + 3 AH2. It functions in the pathway carotenoid biosynthesis. Its activity is regulated as follows. Is inhibited by diphenylamine (DPA). Is also slightly inhibited by NAD, NADP or ATP in the presence of FAD. Its function is as follows. Converts phytoene into all-trans-neurosporene as the major product, via the intermediary of phytofluene and zeta-carotene, by the introduction of three double bonds. Both intermediates, phytofluene and zeta-carotene, can be used as substrates and converted to neurosporene. 1,2-epoxy phytoene is also a suitable substrate whereas the C30 diapophytoene is not. This Rhodobacter capsulatus (strain ATCC BAA-309 / NBRC 16581 / SB1003) protein is Phytoene desaturase (neurosporene-forming) (crtI).